Here is a 1485-residue protein sequence, read N- to C-terminus: MQRSPVEDANCLSRYFFWWTNPIMRKGFKEKLRPSDVYQAPSQDAADILAERLEKEWDREVASGKKKPSLLRAMARCYIKPFLLFGFLLYIGEATKTVQPQLLGRIIASFDPAHEPERANGYFLAFGLGLLFTARFLLLQPAMFGLHHLGMQIRIALFSIIYKKTLKLSSRVLDKISTGQLVSLMSANLGKFDQSLGMAHFIWISPLQCILCTGLIWELIDVNSFCALAAISLLGVLQAFLSHKMGPYKAQKVLLTNKRLALTSEIMENLHSVKAYGWEEIMETLIKNIRQDEVKLTRKIGSLRYFYSSAYFFSAIFVIVAAVVPHALSRGINLRRIFTTLSYCMVLRMTVTRQLPGSIQMWYDTMRLIWKIEEFLSKEEYKLMEYDLSITELELQDVTASWDEGPGELLERIKQENKANGHHNGDAGLFFTNLYVAPVLKDISLKLKKGEMLAVTGSMGSGKSSLLMTILGELVPSSGKIRHSGRISYSSQTAWIMPGTIRDNILFGLTYDEYRYKSVVKACQLEEDLAALPEKDKTPMAEGGLNLSGGQKARVALARAVYRDADLYLLDAPFTHLDIATEKEIFDKCLCKLMASKTRILVTNKIEHLKRADKILLLHNGESFFYGTFPELQSERPDFSSLLLGLEAYDNISAERRCSILTETLHRVSVDESAGMQPERSAFRQVPPTKPMYIDERKASVIVNPLGVARKASFIQVPEEEVRRTLPDRKFSLVPENELVDESFMGSDVYHNHGVHMAGQRRQSVLAFMTNAQGQGRREHLQSSFRRRLSVVPQSELASELDIYTRRLSDSTYDMTGILEEENIEACLTDEIDEIEETFETTKWNTYVRYVSNNKSLLYVLIFILFIAAIEIAGSVAGIFLITDELWREEHQRSEPNMTKHSNASSSGQTYAITVTPTSSYYILYIYVATSESLLAMGFFRGLPFVHTTITISKKLHQKMLHAVLSAPMSVLNTMKTGRIMNRFTKDMATIDDMLPLLMFDFVQLTVVVVGCILVVSIVRPYIFLAATPLAIIFIVMRKYFLRTGQQLKQLETEARSPIFSHLIMSLKGLWTIRAFERQAYFEALFHKTLNTHTATWFLYLSTLRWFLFRADILFVFFFTLAAWIAVGTNQDKPGEIGIIICLAMLILGTFQWCVATSIAVDGMMRSVDRVFKFIDLPSETPKPDKGKDSDLIIENVDAQADSSWPHRGQIEVRNLTVKYTEAGHAVLKNLSFSAEGRQRVGILGRTGSGKSSLFNALLKLVYTDGEISIDGVNWNKMPLQKWRKAFGVVPQKVFIFTGPLRMNLDPYGCHSDEELWRVAEEVGLKTVIEQFPDKLDFQLEYGGYVLSNGHKQLICLARSILSGARILLLDEPSAHLDPVTIKVLKKTLRQSFSTCTILLSEHKVEPLLECQSFLMMDKGQVKTYDSIQKLLNETSHLKQAISPAERLKLFPRRNSSMRTPQSKLSSVTQTLQEEAEDNIQDTRL.

The Cytoplasmic segment spans residues 1–78 (MQRSPVEDAN…SLLRAMARCY (78 aa)). Residues 79-99 (IKPFLLFGFLLYIGEATKTVQ) traverse the membrane as a helical segment. Positions 83–353 (LLFGFLLYIG…CMVLRMTVTR (271 aa)) constitute an ABC transmembrane type-1 1 domain. At 100–123 (PQLLGRIIASFDPAHEPERANGYF) the chain is on the extracellular side. The chain crosses the membrane as a helical span at residues 124-149 (LAFGLGLLFTARFLLLQPAMFGLHHL). The Cytoplasmic portion of the chain corresponds to 150-195 (GMQIRIALFSIIYKKTLKLSSRVLDKISTGQLVSLMSANLGKFDQS). The helical transmembrane segment at 196–216 (LGMAHFIWISPLQCILCTGLI) threads the bilayer. Over 217-224 (WELIDVNS) the chain is Extracellular. Residues 225-245 (FCALAAISLLGVLQAFLSHKM) form a helical membrane-spanning segment. Residues 246–299 (GPYKAQKVLLTNKRLALTSEIMENLHSVKAYGWEEIMETLIKNIRQDEVKLTRK) are Cytoplasmic-facing. The chain crosses the membrane as a helical span at residues 300-320 (IGSLRYFYSSAYFFSAIFVIV). Topologically, residues 321 to 340 (AAVVPHALSRGINLRRIFTT) are extracellular. The helical transmembrane segment at 341–363 (LSYCMVLRMTVTRQLPGSIQMWY) threads the bilayer. At 364-856 (DTMRLIWKIE…YVRYVSNNKS (493 aa)) the chain is on the cytoplasmic side. Residues tryptophan 402, 457–464 (GSMGSGKS), and glutamine 492 contribute to the ATP site. The region spanning 424–645 (NGDAGLFFTN…RPDFSSLLLG (222 aa)) is the ABC transporter 1 domain. The tract at residues 653-826 (SAERRCSILT…GILEEENIEA (174 aa)) is disordered R region. Residues 857–877 (LLYVLIFILFIAAIEIAGSVA) traverse the membrane as a helical segment. An ABC transmembrane type-1 2 domain is found at 860 to 1163 (VLIFILFIAA…CVATSIAVDG (304 aa)). The Extracellular segment spans residues 878-924 (GIFLITDELWREEHQRSEPNMTKHSNASSSGQTYAITVTPTSSYYIL). Asparagine 897 and asparagine 903 each carry an N-linked (GlcNAc...) asparagine glycan. A discontinuously helical transmembrane segment spans residues 925 to 946 (YIYVATSESLLAMGFFRGLPFV). Residues 947-996 (HTTITISKKLHQKMLHAVLSAPMSVLNTMKTGRIMNRFTKDMATIDDMLP) are Cytoplasmic-facing. Residues 997–1019 (LLMFDFVQLTVVVVGCILVVSIV) form a helical membrane-spanning segment. The Extracellular segment spans residues 1020 to 1021 (RP). The chain crosses the membrane as a helical span at residues 1022-1042 (YIFLAATPLAIIFIVMRKYFL). The Cytoplasmic segment spans residues 1043–1103 (RTGQQLKQLE…TATWFLYLST (61 aa)). Residues 1104–1124 (LRWFLFRADILFVFFFTLAAW) form a helical membrane-spanning segment. At 1125–1138 (IAVGTNQDKPGEIG) the chain is on the extracellular side. Residues 1139–1159 (IIICLAMLILGTFQWCVATSI) traverse the membrane as a helical segment. The Cytoplasmic segment spans residues 1160 to 1485 (AVDGMMRSVD…AEDNIQDTRL (326 aa)). The ABC transporter 2 domain maps to 1211–1444 (IEVRNLTVKY…TSHLKQAISP (234 aa)). ATP contacts are provided by residues tyrosine 1220 and 1245 to 1252 (GRTGSGKS). The tract at residues 1452-1485 (PRRNSSMRTPQSKLSSVTQTLQEEAEDNIQDTRL) is disordered. Polar residues predominate over residues 1454–1473 (RNSSMRTPQSKLSSVTQTLQ). The span at 1474–1485 (EEAEDNIQDTRL) shows a compositional bias: acidic residues. A PDZ-binding motif is present at residues 1483–1485 (TRL).

This sequence belongs to the ABC transporter superfamily. ABCC family. CFTR transporter (TC 3.A.1.202) subfamily. As to quaternary structure, monomer; does not require oligomerization for channel activity. Interacts with cse1l; this interaction may down-regulate cftr activity. Post-translationally, phosphorylated; this activates the channel. Dephosphorylation strongly decreases ATPase activity. Phosphorylation at PKA sites activates the channel. Phosphorylation at PKC sites enhances the response to phosphorylation by PKA. As to expression, detected in gut epithelium (at protein level). Detected in kidney, spleen, intestine and liver. Detected in pancreatic duct epithelium at 5 dpf and throughout adult life.

It is found in the apical cell membrane. Its subcellular location is the early endosome membrane. The protein localises to the cell membrane. The protein resides in the recycling endosome membrane. It localises to the endoplasmic reticulum membrane. It catalyses the reaction ATP + H2O + closed Cl(-) channel = ADP + phosphate + open Cl(-) channel.. The enzyme catalyses chloride(in) = chloride(out). The catalysed reaction is hydrogencarbonate(in) = hydrogencarbonate(out). It carries out the reaction ATP + H2O = ADP + phosphate + H(+). Functionally, epithelial ion channel that plays an important role in the regulation of epithelial ion and water transport and fluid homeostasis. Mediates the transport of chloride ions across the cell membrane. Possesses an intrinsic ATPase activity and utilizes ATP to gate its channel; the passive flow of anions through the channel is gated by cycles of ATP binding and hydrolysis by the ATP-binding domains. The ion channel is also permeable to HCO(3)(-); selectivity depends on the extracellular chloride concentration. Exerts its function also by modulating the activity of other ion channels and transporters. Contributes to the regulation of the pH and the ion content of the epithelial fluid layer. Required for normal fluid homeostasis in the gut. Required for normal volume expansion and cell shape changes of Kupffer's vesicle during embryonic development and for normal establishment of left-right body patterning. Required for normal resistance to infection by P.aeruginosa strain PA14 and strain SMC573. The chain is Cystic fibrosis transmembrane conductance regulator from Danio rerio (Zebrafish).